The sequence spans 198 residues: V-type ATP synthase subunit E 1 (198 aa).

The protein belongs to the V-ATPase E subunit family.

In terms of biological role, produces ATP from ADP in the presence of a proton gradient across the membrane. This chain is V-type ATP synthase subunit E 1, found in Clostridium tetani (strain Massachusetts / E88).